The following is a 161-amino-acid chain: Vitamin K epoxide reductase complex subunit 1 (161 aa).

Residues 1–9 are Cytoplasmic-facing; sequence MGTTWRSPG. The chain crosses the membrane as a helical span at residues 10-29; the sequence is RLRLALCLAGLALSLYALHV. The Lumenal portion of the chain corresponds to 30–80; the sequence is KAARARNEDYRALCDVGTAISCSRVFSSRWGRGFGLVEHVLGADSILNQSN. A disulfide bond links cysteine 43 and cysteine 51. Asparagine 80 is a (S)-warfarin binding site. The chain crosses the membrane as a helical span at residues 81–95; sequence SIFGCMFYTIQLLLG. The Cytoplasmic segment spans residues 96–100; the sequence is CLRGR. The helical transmembrane segment at 101–128 threads the bilayer; it reads WASILLILSSLVSVAGSLYLAWILFFVL. Residues 129–131 lie on the Lumenal side of the membrane; sequence YDF. An intrachain disulfide couples cysteine 132 to cysteine 135. The helical transmembrane segment at 132-153 threads the bilayer; sequence CIVCITTYAINAGLMLLSFQKV. Phylloquinone-binding residues include cysteine 135 and tyrosine 139. Tyrosine 139 lines the (S)-warfarin pocket. Residues 154-161 lie on the Cytoplasmic side of the membrane; sequence PEHKVKKP.

It belongs to the VKOR family. Highly expressed in liver. Detected at lower levels in lung, kidney and testis.

It localises to the endoplasmic reticulum membrane. It carries out the reaction phylloquinone + [protein]-disulfide + H2O = 2,3-epoxyphylloquinone + [protein]-dithiol. The catalysed reaction is phylloquinol + [protein]-disulfide = phylloquinone + [protein]-dithiol. With respect to regulation, inhibited by warfarin (coumadin). Warfarin locks VKORC1 in both redox states into the closed conformation. In terms of biological role, involved in vitamin K metabolism. Catalytic subunit of the vitamin K epoxide reductase (VKOR) complex which reduces inactive vitamin K 2,3-epoxide to active vitamin K. Vitamin K is required for the gamma-carboxylation of various proteins, including clotting factors, and is required for normal blood coagulation, but also for normal bone development. The polypeptide is Vitamin K epoxide reductase complex subunit 1 (Vkorc1) (Rattus norvegicus (Rat)).